Here is a 1106-residue protein sequence, read N- to C-terminus: Putative pre-mRNA-splicing factor ATP-dependent RNA helicase DHX16 (1106 aa).

3 disordered regions span residues 73-100, 120-286, and 366-394; these read KIQNITSSSSSSSSTSLSSSSSSKDKEK, DDIV…TKSR, and YINDNKNKKGNDSSSSSSYNPEQKEWEQN. Positions 78-94 are enriched in low complexity; sequence TSSSSSSSSTSLSSSSS. Residues 138–155 are compositionally biased toward basic residues; sequence KRKKKEKKKEKKDKKDKK. The span at 156–167 shows a compositional bias: basic and acidic residues; the sequence is DKKSSTRKKSDN. Low complexity predominate over residues 189-201; sequence NNENNDNNNDNNN. The span at 232 to 283 shows a compositional bias: basic and acidic residues; it reads REQREVKELSDRIKKRDEKSTKKKIVDDSETKESIERKNRLEQNEQLETERT. The region spanning 477–640 is the Helicase ATP-binding domain; sequence IDAVREYQVL…FDGAPTFNIP (164 aa). ATP is bound at residue 490-497; the sequence is GETGSGKT. Residues 587–590 carry the DEAH box motif; it reads DEAH. The Helicase C-terminal domain maps to 665–838; sequence TVLQIHITEP…NVVLLLKSMG (174 aa).

It belongs to the DEAD box helicase family. DEAH subfamily. DDX16/PRP8 sub-subfamily. As to quaternary structure, component of pre-catalytic spliceosome complexes.

It is found in the nucleus. Its subcellular location is the nucleoplasm. The enzyme catalyses ATP + H2O = ADP + phosphate + H(+). Functionally, required for pre-mRNA splicing as component of the spliceosome. Contributes to pre-mRNA splicing after spliceosome formation and prior to the first transesterification reaction. In Dictyostelium discoideum (Social amoeba), this protein is Putative pre-mRNA-splicing factor ATP-dependent RNA helicase DHX16 (dhx16).